Consider the following 710-residue polypeptide: Proline-rich receptor-like protein kinase PERK13 (710 aa).

Residues 1–229 (MSDSPTSSPP…SVPPPANSGG (229 aa)) form a disordered region. Over 1-235 (MSDSPTSSPP…NSGGGYQGKT (235 aa)) the chain is Extracellular. 4 stretches are compositionally biased toward pro residues: residues 7–21 (SSPP…PPPD), 29–130 (APPP…PPPP), 137–151 (PPAP…PPAS), and 168–188 (ATSP…PNAP). Asn191 carries N-linked (GlcNAc...) asparagine glycosylation. The segment covering 209 to 220 (SPSRGVPSSGNS) has biased composition (low complexity). A helical transmembrane segment spans residues 236-256 (MAGFAIAGFAVIALMAVVFLV). The Cytoplasmic portion of the chain corresponds to 257 to 710 (RRKKKRNIDA…ENRNFNNRRY (454 aa)). The tract at residues 289–334 (QNPTKGYSGPGGYNSQQQSNSGNSFGSQRGGGGYTRSGSAPDSAVM) is disordered. A compositionally biased stretch (low complexity) spans 301-315 (YNSQQQSNSGNSFGS). Thr342 is modified (phosphothreonine). Residues 353–619 (FSKHNILGEG…RHSGPKRPRM (267 aa)) form the Protein kinase domain. ATP is bound by residues 359–367 (LGEGGFGCV) and Lys381. Phosphotyrosine is present on Tyr426. Asp477 functions as the Proton acceptor in the catalytic mechanism. A Phosphoserine modification is found at Ser510. 2 positions are modified to phosphothreonine: Thr511 and Thr516. Tyr524 carries the phosphotyrosine modification. A disordered region spans residues 676–710 (SGDYSVQDSRKGSNGASSEFTRNETENRNFNNRRY).

It belongs to the protein kinase superfamily. Ser/Thr protein kinase family. As to quaternary structure, interacts with KIPK1 and KIPK2 (via its cytosolic domain). Mostly expressed in roots, especially in root hairs.

It localises to the cell membrane. The catalysed reaction is L-seryl-[protein] + ATP = O-phospho-L-seryl-[protein] + ADP + H(+). It catalyses the reaction L-threonyl-[protein] + ATP = O-phospho-L-threonyl-[protein] + ADP + H(+). Functionally, negatively regulates root hair elongation. In Arabidopsis thaliana (Mouse-ear cress), this protein is Proline-rich receptor-like protein kinase PERK13 (PERK13).